The sequence spans 492 residues: Bifunctional purine biosynthesis protein PurH (492 aa).

In terms of domain architecture, MGS-like spans 1-144 (MKKAILSVSN…KNYKHVTTIV (144 aa)).

The protein belongs to the PurH family.

It carries out the reaction (6R)-10-formyltetrahydrofolate + 5-amino-1-(5-phospho-beta-D-ribosyl)imidazole-4-carboxamide = 5-formamido-1-(5-phospho-D-ribosyl)imidazole-4-carboxamide + (6S)-5,6,7,8-tetrahydrofolate. The catalysed reaction is IMP + H2O = 5-formamido-1-(5-phospho-D-ribosyl)imidazole-4-carboxamide. The protein operates within purine metabolism; IMP biosynthesis via de novo pathway; 5-formamido-1-(5-phospho-D-ribosyl)imidazole-4-carboxamide from 5-amino-1-(5-phospho-D-ribosyl)imidazole-4-carboxamide (10-formyl THF route): step 1/1. Its pathway is purine metabolism; IMP biosynthesis via de novo pathway; IMP from 5-formamido-1-(5-phospho-D-ribosyl)imidazole-4-carboxamide: step 1/1. The chain is Bifunctional purine biosynthesis protein PurH from Staphylococcus aureus (strain Newman).